The sequence spans 963 residues: MEGGRGGGDGNFLPNSNFGVFSDSAMDMDFMDELLFDGCWLETTDGKSLKQTMGQQVSDSTTMNDNNNNSYLYGYQYAENLSQDHISNEETGRKFPPIPPGFLKIEDLSNQVPFDQSAVMSSAQAEKFLLEESEGGRRYWIAPRTSQGPSSSVKERLVQAIEGLNEEVQDKDFLIQIWLPIQQEGKNFLTTSEQPHFFNPKYSSLKRYRDVSVAYNFLADEDSKESVGLPGRVFLKKLPEWTPDVRFFRSEEYPRIKEAEQCDVRGSLALPVFERGSGTCLGVVEIVTTTQKMNYRPELDNICKALESVNLRSSRSLNPPSREFLQVYNEFYYAALPEVSEFLTLVCRVYDLPLALTWAPCARQGKVGSRHSDENFSECVSTVDDACIVPDHQSRHFLEACSEHHLLQGEGIVGKAFNATKLFFVPEVTTFSKTNYPLAHHAKISGLHAALAVPLKNKFNSSVEFVLEFFFPKACLDTEAQQDMLKSLSATLQQDFRSLNLFIDKELELEVVFPVREEVVFAENPLINAGTGEDMKPLPLEEISQEDSSWISHMIKANEKGKGVSLSWEYQKEEPKEEFMLTSGWDNNQIGSGHNNFLSEAEQFQKVTNSGLRIDMDPSFESASFGVGQTLLGSRRPGEKRRTKTEKTIGLEVLRQYFAGSLKDAAKSIGVCPTTLKRICRQHGITRWPSRKIKKVGHSLKKLQLVIDSVQGVQGSIQLDSFYTSFPELSSPHMSGTGTSFKNPNAQTENGVSAQGTAAAPKSPPSSSCSHSSGSSTCCSTGANQSTNTGTTSNTVTTLMAENASAILKRARSEVRLHTMNQDETKSLSRTLSHKTFSEHPLFENPPRLPENSSRKLKAGGASKVKATFGEAKVRFTLLPTWGFRELQHEIARRFNIDNIAPFDLKYLDDDKEWVLLTCEADLEECIDIYRSSQSRTIKISVHEASQVKLGGSFGSIGLGPSL.

The RWP-RK domain occupies 635–716 (RRPGEKRRTK…IDSVQGVQGS (82 aa)). A compositionally biased stretch (polar residues) spans 734-755 (MSGTGTSFKNPNAQTENGVSAQ). Residues 734-794 (MSGTGTSFKN…QSTNTGTTSN (61 aa)) form a disordered region. Low complexity predominate over residues 756-794 (GTAAAPKSPPSSSCSHSSGSSTCCSTGANQSTNTGTTSN). Positions 862-945 (ASKVKATFGE…RTIKISVHEA (84 aa)) constitute a PB1 domain.

Its subcellular location is the nucleus. Probable transcription factor. The chain is Protein NLP2 (NLP2) from Arabidopsis thaliana (Mouse-ear cress).